A 310-amino-acid chain; its full sequence is HMG box-containing protein C28F2.11 (310 aa).

Residues E69–V95 are compositionally biased toward low complexity. A disordered region spans residues E69 to N310. Phosphoserine is present on S70. Residue T105 is modified to Phosphothreonine. Residues P117–N187 constitute a DNA-binding region (HMG box). Composition is skewed to basic and acidic residues over residues Q131–A178 and V200–E226. A phosphoserine mark is found at S161, S214, and S215. Phosphothreonine occurs at positions 217 and 237. Over residues S255–P268 the composition is skewed to polar residues. S271, S278, S294, S295, and S297 each carry phosphoserine. 2 positions are modified to phosphothreonine: T302 and T305.

Its subcellular location is the cytoplasm. The sequence is that of HMG box-containing protein C28F2.11 from Schizosaccharomyces pombe (strain 972 / ATCC 24843) (Fission yeast).